Reading from the N-terminus, the 165-residue chain is Choriogonadotropin subunit beta 3 (165 aa).

The N-terminal stretch at 1–20 (MEMFQGLLLLLLLSMGGTWA) is a signal peptide. Cystine bridges form between Cys29/Cys77, Cys43/Cys92, Cys46/Cys130, Cys54/Cys108, Cys58/Cys110, and Cys113/Cys120. Residues Asn33 and Asn50 are each glycosylated (N-linked (GlcNAc...) asparagine). Positions 131-165 (DDPRFQDSSSSKAPPPSLPSPSRLPGPSDTPILPQ) are disordered. Residues Ser141, Ser147, Ser152, and Ser158 are each glycosylated (O-linked (GalNAc...) serine). The segment covering 143-154 (APPPSLPSPSRL) has biased composition (pro residues).

The protein belongs to the glycoprotein hormones subunit beta family. As to quaternary structure, heterodimer of a common alpha chain identical in LH, FSH, TSH and HCG and a unique beta chain distinct in each of the hormones. As to expression, high expression in the placenta throughout pregnancy.

The protein resides in the secreted. Functionally, beta subunit of the human chorionic gonadotropin (hCG). hCG is a complex glycoprotein composed of two glycosylated subunits alpha and beta which are non-covalently associated. The alpha subunit is identical to those in the pituitary gonadotropin hormones (LH, FSH and TSH). The beta subunits are distinct in each of the hormones and confer receptor and biological specificity. Has an essential role in pregnancy and maternal adaptation. Stimulates the ovaries to synthesize the steroids that are essential for the maintenance of pregnancy. This is Choriogonadotropin subunit beta 3 (CGB3) from Homo sapiens (Human).